We begin with the raw amino-acid sequence, 458 residues long: Monomethylamine methyltransferase MtmB1 (458 aa).

Residue O202 is a non-standard amino acid, pyrrolysine.

Belongs to the monomethylamine methyltransferase family. As to quaternary structure, can form a complex with MtmC.

It catalyses the reaction Co(I)-[methylamine-specific corrinoid protein] + methylamine + H(+) = methyl-Co(III)-[methylamine-specific corrinoid protein] + NH4(+). It participates in one-carbon metabolism; methanogenesis from methylamine. Catalyzes the transfer of the methyl group from monomethylamine to the corrinoid cofactor of MtmC. This Methanosarcina acetivorans (strain ATCC 35395 / DSM 2834 / JCM 12185 / C2A) protein is Monomethylamine methyltransferase MtmB1 (mtmB1).